The primary structure comprises 418 residues: Glycine betaine transport ATP-binding protein OpuAA (418 aa).

An ABC transporter domain is found at 34-270; that stretch reads KTKKEILKAT…PSNEYVEKFV (237 aa). Position 66-73 (66-73) interacts with ATP; it reads GLSGSGKS. CBS domains lie at 284–340 and 344–403; these read IMKR…DLSL and LNTE…INAE.

This sequence belongs to the ABC transporter superfamily. The complex is composed of two ATP-binding proteins (OpuAA), two transmembrane proteins (OpuAB) and a solute-binding protein (OpuAC).

It catalyses the reaction a quaternary ammonium(out) + ATP + H2O = a quaternary ammonium(in) + ADP + phosphate + H(+). Its function is as follows. Involved in a multicomponent binding-protein-dependent transport system for glycine betaine. Probably responsible for energy coupling to the transport system. In Bacillus subtilis (strain 168), this protein is Glycine betaine transport ATP-binding protein OpuAA (opuAA).